The chain runs to 329 residues: 4-hydroxythreonine-4-phosphate dehydrogenase (329 aa).

Substrate is bound by residues H136 and T137. H166, H211, and H266 together coordinate a divalent metal cation. Substrate-binding residues include K274, N283, and R292.

The protein belongs to the PdxA family. As to quaternary structure, homodimer. The cofactor is Zn(2+). Mg(2+) is required as a cofactor. Requires Co(2+) as cofactor.

The protein localises to the cytoplasm. The enzyme catalyses 4-(phosphooxy)-L-threonine + NAD(+) = 3-amino-2-oxopropyl phosphate + CO2 + NADH. It participates in cofactor biosynthesis; pyridoxine 5'-phosphate biosynthesis; pyridoxine 5'-phosphate from D-erythrose 4-phosphate: step 4/5. Catalyzes the NAD(P)-dependent oxidation of 4-(phosphooxy)-L-threonine (HTP) into 2-amino-3-oxo-4-(phosphooxy)butyric acid which spontaneously decarboxylates to form 3-amino-2-oxopropyl phosphate (AHAP). The chain is 4-hydroxythreonine-4-phosphate dehydrogenase from Escherichia coli O139:H28 (strain E24377A / ETEC).